The sequence spans 205 residues: Guanylate kinase (205 aa).

Residues 5–184 enclose the Guanylate kinase-like domain; sequence GLLIVLSGPS…AVQKIKGIVE (180 aa). Position 12–19 (12–19) interacts with ATP; sequence GPSGVGKG.

Belongs to the guanylate kinase family.

Its subcellular location is the cytoplasm. The catalysed reaction is GMP + ATP = GDP + ADP. In terms of biological role, essential for recycling GMP and indirectly, cGMP. The polypeptide is Guanylate kinase (Listeria monocytogenes serotype 4b (strain F2365)).